The chain runs to 183 residues: Dual-action ribosomal maturation protein DarP (183 aa).

Belongs to the DarP family.

The protein resides in the cytoplasm. In terms of biological role, member of a network of 50S ribosomal subunit biogenesis factors which assembles along the 30S-50S interface, preventing incorrect 23S rRNA structures from forming. Promotes peptidyl transferase center (PTC) maturation. The chain is Dual-action ribosomal maturation protein DarP from Salmonella enteritidis PT4 (strain P125109).